The following is a 287-amino-acid chain: Orotidine 5'-phosphate decarboxylase (287 aa).

Residue Lys97 is the Proton donor of the active site.

It belongs to the OMP decarboxylase family. Type 2 subfamily.

It carries out the reaction orotidine 5'-phosphate + H(+) = UMP + CO2. Its pathway is pyrimidine metabolism; UMP biosynthesis via de novo pathway; UMP from orotate: step 2/2. In Clostridium perfringens (strain 13 / Type A), this protein is Orotidine 5'-phosphate decarboxylase (pyrF).